A 1407-amino-acid polypeptide reads, in one-letter code: DNA-directed RNA polymerase subunit beta' (1407 aa).

The Zn(2+) site is built by C70, C72, C85, and C88. Residues D460, D462, and D464 each contribute to the Mg(2+) site. Residues C814, C888, C895, and C898 each contribute to the Zn(2+) site. N6-acetyllysine is present on K972.

Belongs to the RNA polymerase beta' chain family. In terms of assembly, the RNAP catalytic core consists of 2 alpha, 1 beta, 1 beta' and 1 omega subunit. When a sigma factor is associated with the core the holoenzyme is formed, which can initiate transcription. It depends on Mg(2+) as a cofactor. Zn(2+) is required as a cofactor.

The enzyme catalyses RNA(n) + a ribonucleoside 5'-triphosphate = RNA(n+1) + diphosphate. DNA-dependent RNA polymerase catalyzes the transcription of DNA into RNA using the four ribonucleoside triphosphates as substrates. This is DNA-directed RNA polymerase subunit beta' from Shigella flexneri serotype 5b (strain 8401).